The primary structure comprises 466 residues: ATP synthase subunit beta (466 aa).

148–155 (GGAGVGKT) serves as a coordination point for ATP.

The protein belongs to the ATPase alpha/beta chains family. As to quaternary structure, F-type ATPases have 2 components, CF(1) - the catalytic core - and CF(0) - the membrane proton channel. CF(1) has five subunits: alpha(3), beta(3), gamma(1), delta(1), epsilon(1). CF(0) has three main subunits: a(1), b(2) and c(9-12). The alpha and beta chains form an alternating ring which encloses part of the gamma chain. CF(1) is attached to CF(0) by a central stalk formed by the gamma and epsilon chains, while a peripheral stalk is formed by the delta and b chains.

The protein resides in the cell inner membrane. It catalyses the reaction ATP + H2O + 4 H(+)(in) = ADP + phosphate + 5 H(+)(out). Functionally, produces ATP from ADP in the presence of a proton gradient across the membrane. The catalytic sites are hosted primarily by the beta subunits. The protein is ATP synthase subunit beta of Xylella fastidiosa (strain M12).